The following is a 367-amino-acid chain: 3-dehydroquinate synthase (367 aa).

Residues 69–74 (DGEAFK), 103–107 (GVIGD), 127–128 (TT), Lys140, and Lys149 each bind NAD(+). Glu182, His245, and His262 together coordinate Zn(2+).

The protein belongs to the sugar phosphate cyclases superfamily. Dehydroquinate synthase family. Requires NAD(+) as cofactor. Co(2+) serves as cofactor. Zn(2+) is required as a cofactor.

It is found in the cytoplasm. It carries out the reaction 7-phospho-2-dehydro-3-deoxy-D-arabino-heptonate = 3-dehydroquinate + phosphate. The protein operates within metabolic intermediate biosynthesis; chorismate biosynthesis; chorismate from D-erythrose 4-phosphate and phosphoenolpyruvate: step 2/7. Functionally, catalyzes the conversion of 3-deoxy-D-arabino-heptulosonate 7-phosphate (DAHP) to dehydroquinate (DHQ). This Pseudomonas syringae pv. tomato (strain ATCC BAA-871 / DC3000) protein is 3-dehydroquinate synthase.